Reading from the N-terminus, the 491-residue chain is MEEGKMDENEWGYHGEGNKSLVVAHAQRCVVLRFLKFPPNRKKTSEEIFQHLQNIVDFGKNVMKEFLGENYVHYGEVVQLPLEFVKQLCLKIQSERPESRCDKDLDTLSGYAMCLPNLTRLQTYRFAEHRPILCVEIKPKCGFIPFSSDVTHEMKHKVCRYCMHQHLKVATGKWKQISKYCPLDLYSGNKQRMHFALKSLLQEAQNNLKIFKNGELIYGCKDARSPVADWSELAHHLKPFFFPSNGLASGPHCTRAVIRELVHVITRVLLSGSDKGRAGTLSPGLGPQGPRVCEASPFSRSLRCQGKNTPERSGLPKGCLLYKTLQVQMLDLLDIEGLYPLYNRVERYLEEFPEERKTLQIDGPYDEAFYQKLLDLSTEDDGTVAFALTKVQQYRVAMTAKDCSIMIALSPCLQDASSDQRPVVPSSRSRFAFSVSVLDLDLKPYESIPHQYKLDGKIVNYYSKTVRAKDNAVMSTRFKESEDCTLVLHKV.

Positions 136–140 match the EXKPK motif motif; that stretch reads EIKPK. Phosphoserine is present on serine 282.

The protein belongs to the IPK1 type 2 family. Ubiquitously expressed, with high expression in heart, brain, testis and placenta.

The protein localises to the cytoplasm. Its subcellular location is the nucleus. It carries out the reaction 1D-myo-inositol 1,3,4,5,6-pentakisphosphate + ATP = 1D-myo-inositol hexakisphosphate + ADP + H(+). Its function is as follows. Phosphorylates Ins(1,3,4,5,6)P5 at position 2 to form Ins(1,2,3,4,5,6)P6 (InsP6 or phytate). InsP6 is involved in many processes such as mRNA export, non-homologous end-joining, endocytosis, ion channel regulation. It also protects cells from TNF-alpha-induced apoptosis. This chain is Inositol-pentakisphosphate 2-kinase (IPPK), found in Homo sapiens (Human).